Here is a 101-residue protein sequence, read N- to C-terminus: Small ribosomal subunit protein uS14 (101 aa).

Belongs to the universal ribosomal protein uS14 family. As to quaternary structure, part of the 30S ribosomal subunit. Contacts proteins S3 and S10.

Binds 16S rRNA, required for the assembly of 30S particles and may also be responsible for determining the conformation of the 16S rRNA at the A site. This is Small ribosomal subunit protein uS14 from Enterobacter sp. (strain 638).